Reading from the N-terminus, the 218-residue chain is Phosphatidylserine decarboxylase proenzyme (218 aa).

Ser-188 serves as the catalytic Schiff-base intermediate with substrate; via pyruvic acid. The residue at position 188 (Ser-188) is a Pyruvic acid (Ser); by autocatalysis.

Belongs to the phosphatidylserine decarboxylase family. PSD-A subfamily. As to quaternary structure, heterodimer of a large membrane-associated beta subunit and a small pyruvoyl-containing alpha subunit. It depends on pyruvate as a cofactor. In terms of processing, is synthesized initially as an inactive proenzyme. Formation of the active enzyme involves a self-maturation process in which the active site pyruvoyl group is generated from an internal serine residue via an autocatalytic post-translational modification. Two non-identical subunits are generated from the proenzyme in this reaction, and the pyruvate is formed at the N-terminus of the alpha chain, which is derived from the carboxyl end of the proenzyme. The post-translation cleavage follows an unusual pathway, termed non-hydrolytic serinolysis, in which the side chain hydroxyl group of the serine supplies its oxygen atom to form the C-terminus of the beta chain, while the remainder of the serine residue undergoes an oxidative deamination to produce ammonia and the pyruvoyl prosthetic group on the alpha chain.

The protein resides in the cell membrane. The catalysed reaction is a 1,2-diacyl-sn-glycero-3-phospho-L-serine + H(+) = a 1,2-diacyl-sn-glycero-3-phosphoethanolamine + CO2. Its pathway is phospholipid metabolism; phosphatidylethanolamine biosynthesis; phosphatidylethanolamine from CDP-diacylglycerol: step 2/2. Functionally, catalyzes the formation of phosphatidylethanolamine (PtdEtn) from phosphatidylserine (PtdSer). The polypeptide is Phosphatidylserine decarboxylase proenzyme (Streptomyces coelicolor (strain ATCC BAA-471 / A3(2) / M145)).